The chain runs to 240 residues: Sulfite dehydrogenase subunit B (240 aa).

3 consecutive 4Fe-4S ferredoxin-type domains span residues 4-34 (LALV…WAGP), 64-95 (TETV…KRPD), and 97-126 (GVVL…LDAQ). 12 residues coordinate [4Fe-4S] cluster: Cys13, Cys16, Cys19, Cys23, Cys73, Cys76, Cys81, Cys85, Cys106, Cys109, Cys112, and Cys116.

In terms of assembly, forms a heterotrimeric membrane-bound complex composed of a catalytic heterodimer (SoeAB) and a membrane anchor protein (SoeC). [4Fe-4S] cluster serves as cofactor.

The protein resides in the cell inner membrane. Part of the SoeABC complex that catalyzes the oxidation of sulfite to sulfate. SoeB is probably the electron transfer subunit. The chain is Sulfite dehydrogenase subunit B from Allochromatium vinosum (strain ATCC 17899 / DSM 180 / NBRC 103801 / NCIMB 10441 / D) (Chromatium vinosum).